The chain runs to 240 residues: MSTEPEASAQPLPAQQSAALFRLMTWLSPAFPVGAFSYSSGIEWAVEAGDVEGAASLRDWLDAMLQHGAGFCDAVLLCHAYRATERHDDAGLLAVAELAAALVTSAERQLETLSQGRAFIEIARKAWNSDGLGRAVAACGEAIAYPVAVGVVSASHGVPLPATLHGFLHAVTSNWISAGARLIPLGQTDSQRVLAALEPSVIATGTRALTASLDDLGTATFRADLASLRHETQYTRLFRS.

It belongs to the UreF family. UreD, UreF and UreG form a complex that acts as a GTP-hydrolysis-dependent molecular chaperone, activating the urease apoprotein by helping to assemble the nickel containing metallocenter of UreC. The UreE protein probably delivers the nickel.

The protein localises to the cytoplasm. Its function is as follows. Required for maturation of urease via the functional incorporation of the urease nickel metallocenter. The chain is Urease accessory protein UreF from Rhodopseudomonas palustris (strain TIE-1).